Here is a 345-residue protein sequence, read N- to C-terminus: 4-hydroxyproline 2-epimerase 1 (345 aa).

Glutamine 85 provides a ligand contact to substrate. Serine 93 acts as the Proton acceptor in catalysis. Substrate is bound by residues 94-95 (GS) and aspartate 251. Cysteine 255 serves as the catalytic Proton donor. 256-257 (GT) lines the substrate pocket.

It belongs to the proline racemase family.

It catalyses the reaction trans-4-hydroxy-L-proline = cis-4-hydroxy-D-proline. In terms of biological role, catalyzes the epimerization of trans-4-hydroxy-L-proline (t4LHyp) to cis-4-hydroxy-D-proline (c4DHyp). May be involved in a degradation pathway of t4LHyp. Can also catalyze the epimerization of trans-3-hydroxy-L-proline (t3LHyp) to cis-3-hydroxy-D-proline (c3DHyp) in vitro. Displays no proline racemase activity. The protein is 4-hydroxyproline 2-epimerase 1 of Rhizobium rhizogenes (strain K84 / ATCC BAA-868) (Agrobacterium radiobacter).